We begin with the raw amino-acid sequence, 433 residues long: Oxidoreductase acuF (433 aa).

It functions in the pathway secondary metabolite biosynthesis. Its function is as follows. Oxidoreductase; part of the gene cluster that mediates the biosynthesis of aculins. The pathway begins with the synthesis of 6-methylsalicylic acid by the polyketide synthase (PKS) acuA via condensation of acetate and malonate units. The 6-methylsalicylic acid decarboxylase acuB then catalyzes the decarboxylation of 6-methylsalicylic acid to yield m-cresol (also known as 3-methylphenol). These first reactions occur in the cytosol. The intermediate m-cresol is then transported into the endoplasmic reticulum where the cytochrome P450 monooxygenase acuC converts it to m-hydroxybenzyl alcohol, which is further converted to gentisyl alcohol by the cytochrome P450 monooxygenase acuD. Gentisyl alcohol is further oxidized by the oxidoreductase acuE that probably catalyzes hydroxylation of the aromatic ring. The aromatic system might then be opened by oxidation through a Baeyer-Villiger type of oxidation, which could be catalyzed by acuF, with the carboxylic acid at C-1 subsequently reduced to an aldehyde by acuG. Subsequently, a hemiacetal is formed, before the dehydrogenase acuH would reduce the double bond between C-4 and C-6. Finally, keto-enol tautomerism results in formation of aculinic acid, which exists as two diastereomers (both R/S configurations at C-1) by non-enzymatic hemiacetal formation. The carboxypeptidase acuI could be involved in the linking of aculinic acid to an aculene A moiety produced by the aculene biosynthesis cluster and which leads to the production of aculin A. AcuI may also be involved in the attachment of proline to aculinic acid to form epi-aculins A and B. In Aspergillus aculeatus (strain ATCC 16872 / CBS 172.66 / WB 5094), this protein is Oxidoreductase acuF.